The sequence spans 386 residues: Succinate--CoA ligase [ADP-forming] subunit beta (386 aa).

Residues 9 to 244 (KAILRSYGVS…LDEEDPKEIE (236 aa)) enclose the ATP-grasp domain. Residues Lys-46, 53 to 55 (GRG), Glu-99, Cys-102, and Glu-107 contribute to the ATP site. Mg(2+) contacts are provided by Asn-199 and Asp-213. Substrate contacts are provided by residues Asn-264 and 321-323 (GIM).

The protein belongs to the succinate/malate CoA ligase beta subunit family. Heterotetramer of two alpha and two beta subunits. The cofactor is Mg(2+).

It catalyses the reaction succinate + ATP + CoA = succinyl-CoA + ADP + phosphate. It carries out the reaction GTP + succinate + CoA = succinyl-CoA + GDP + phosphate. The protein operates within carbohydrate metabolism; tricarboxylic acid cycle; succinate from succinyl-CoA (ligase route): step 1/1. Succinyl-CoA synthetase functions in the citric acid cycle (TCA), coupling the hydrolysis of succinyl-CoA to the synthesis of either ATP or GTP and thus represents the only step of substrate-level phosphorylation in the TCA. The beta subunit provides nucleotide specificity of the enzyme and binds the substrate succinate, while the binding sites for coenzyme A and phosphate are found in the alpha subunit. The chain is Succinate--CoA ligase [ADP-forming] subunit beta from Bacillus cytotoxicus (strain DSM 22905 / CIP 110041 / 391-98 / NVH 391-98).